The sequence spans 289 residues: Protoheme IX farnesyltransferase (289 aa).

9 helical membrane passes run 9 to 29, 40 to 60, 89 to 109, 110 to 130, 134 to 154, 155 to 175, 190 to 209, 228 to 248, and 269 to 289; these read VALM…PVMM, LIAV…TINC, LTFG…LVNW, PSAL…TLGL, TPSN…IGWS, AVTG…FFWT, YAAA…VVTR, VAST…WFLV, and FHMS…TALV.

It belongs to the UbiA prenyltransferase family. Protoheme IX farnesyltransferase subfamily.

It is found in the cell membrane. It catalyses the reaction heme b + (2E,6E)-farnesyl diphosphate + H2O = Fe(II)-heme o + diphosphate. It functions in the pathway porphyrin-containing compound metabolism; heme O biosynthesis; heme O from protoheme: step 1/1. Its function is as follows. Converts heme B (protoheme IX) to heme O by substitution of the vinyl group on carbon 2 of heme B porphyrin ring with a hydroxyethyl farnesyl side group. This chain is Protoheme IX farnesyltransferase, found in Frankia casuarinae (strain DSM 45818 / CECT 9043 / HFP020203 / CcI3).